We begin with the raw amino-acid sequence, 523 residues long: DNA-(apurinic or apyrimidinic site) endonuclease 2 (523 aa).

E42 contacts Mg(2+). Y151 is an active-site residue. The Mg(2+) site is built by D191, N193, and D294. D191 (proton donor/acceptor) is an active-site residue. The disordered stretch occupies residues 348–392 (MKKNKNNSPTQSENVSASASSGSSPTVSRANSVIDVDAYPPEKRR). The span at 353–362 (NNSPTQSENV) shows a compositional bias: polar residues. Residues C458, H461, C484, and C508 each coordinate Zn(2+). The GRF-type zinc-finger motif lies at 458–517 (CEGHKEPCKYLTVRKPGINYGRKFWICARPVGELIKNSNAVSEEDTQPFQCRFFIWDSDW).

Belongs to the DNA repair enzymes AP/ExoA family. Requires Mg(2+) as cofactor. Mn(2+) is required as a cofactor.

It localises to the nucleus. It carries out the reaction Exonucleolytic cleavage in the 3'- to 5'-direction to yield nucleoside 5'-phosphates.. Its function is as follows. DNA repair enzyme that cleaves apurinic/apyrimidinic (AP) sites and removes 3'-blocking groups present at single strand breaks of damaged DNA. Provides the majority of the AP-endonuclease (APE) activity. Repairs phleomycin D1-induced DNA damage. Plays a role in oxidative damage repair. The sequence is that of DNA-(apurinic or apyrimidinic site) endonuclease 2 (apn2) from Schizosaccharomyces pombe (strain 972 / ATCC 24843) (Fission yeast).